The following is a 500-amino-acid chain: Glucose-1-phosphate adenylyltransferase large subunit, chloroplastic/amyloplastic (500 aa).

The transit peptide at 1–33 (RASPPSESRAPLRAPQRSATRQHQARQGPRRMC) directs the protein to the chloroplast. The interval 1 to 47 (RASPPSESRAPLRAPQRSATRQHQARQGPRRMCNGGRGPPYWTAGVT) is disordered.

This sequence belongs to the bacterial/plant glucose-1-phosphate adenylyltransferase family. Heterotetramer.

Its subcellular location is the plastid. It is found in the chloroplast. It localises to the amyloplast. The enzyme catalyses alpha-D-glucose 1-phosphate + ATP + H(+) = ADP-alpha-D-glucose + diphosphate. Its pathway is glycan biosynthesis; starch biosynthesis. Insensitive to 3'phosphoglycerate and orthophosphate. Functionally, this protein plays a role in synthesis of starch. It catalyzes the synthesis of the activated glycosyl donor, ADP-glucose from Glc-1-P and ATP. This Triticum aestivum (Wheat) protein is Glucose-1-phosphate adenylyltransferase large subunit, chloroplastic/amyloplastic (AGA.7).